A 300-amino-acid polypeptide reads, in one-letter code: Ribosomal protein L11 methyltransferase (300 aa).

S-adenosyl-L-methionine-binding residues include Thr-152, Gly-173, Asp-195, and Asn-234.

It belongs to the methyltransferase superfamily. PrmA family.

It localises to the cytoplasm. It carries out the reaction L-lysyl-[protein] + 3 S-adenosyl-L-methionine = N(6),N(6),N(6)-trimethyl-L-lysyl-[protein] + 3 S-adenosyl-L-homocysteine + 3 H(+). Methylates ribosomal protein L11. The sequence is that of Ribosomal protein L11 methyltransferase from Paraburkholderia xenovorans (strain LB400).